Here is a 444-residue protein sequence, read N- to C-terminus: Trigger factor (444 aa).

The PPIase FKBP-type domain occupies 165 to 250 (GDFAKFDFEG…LHEIQELKIP (86 aa)).

It belongs to the FKBP-type PPIase family. Tig subfamily.

It localises to the cytoplasm. The enzyme catalyses [protein]-peptidylproline (omega=180) = [protein]-peptidylproline (omega=0). In terms of biological role, involved in protein export. Acts as a chaperone by maintaining the newly synthesized protein in an open conformation. Functions as a peptidyl-prolyl cis-trans isomerase. This is Trigger factor from Campylobacter jejuni subsp. jejuni serotype O:6 (strain 81116 / NCTC 11828).